The sequence spans 359 residues: Histamine H2 receptor (359 aa).

Residues 1–22 are Extracellular-facing; sequence MISNGTGSSFCLDSPPCRITVS. The N-linked (GlcNAc...) asparagine glycan is linked to Asn-4. The helical transmembrane segment at 23 to 44 threads the bilayer; it reads VVLTVLILITIAGNVVVCLAVG. At 45–57 the chain is on the cytoplasmic side; that stretch reads LNRRLRSLTNCFI. The chain crosses the membrane as a helical span at residues 58-81; it reads VSLAITDLLLGLLVLPFSAFYQLS. Over 82-92 the chain is Extracellular; the sequence is CRWSFGKVFCN. A disulfide bridge connects residues Cys-91 and Cys-174. A helical transmembrane segment spans residues 93-114; sequence IYTSLDVMLCTASILNLFMISL. The Cytoplasmic segment spans residues 115–134; that stretch reads DRYCAVTDPLRYPVLITPVR. Residues 135 to 159 form a helical membrane-spanning segment; sequence VAVSLVLIWVISITLSFLSIHLGWN. Residues 160–180 lie on the Extracellular side of the membrane; sequence SRNETSSFNHTIPKCKVQVNL. A helical transmembrane segment spans residues 181 to 204; the sequence is VYGLVDGLVTFYLPLLVMCITYYR. Residues 205-234 are Cytoplasmic-facing; sequence IFKIARDQAKRIHHMGSWKAATIGEHKATV. Residues 235 to 258 form a helical membrane-spanning segment; that stretch reads TLAAVMGAFIICWFPYFTVFVYRG. The Extracellular portion of the chain corresponds to 259-267; the sequence is LKGDDAINE. The chain crosses the membrane as a helical span at residues 268–289; sequence AFEAVVLWLGYANSALNPILYA. At 290–359 the chain is on the cytoplasmic side; the sequence is TLNRDFRTAY…VTAPRGATDR (70 aa). A lipid anchor (S-palmitoyl cysteine) is attached at Cys-305. Residues 310–327 are compositionally biased toward polar residues; sequence HNAQETSLRSNSSQLARN. The tract at residues 310 to 359 is disordered; it reads HNAQETSLRSNSSQLARNQSREPMRQEEKPLKLQVWSGTEVTAPRGATDR. A compositionally biased stretch (basic and acidic residues) spans 328-340; it reads QSREPMRQEEKPL.

This sequence belongs to the G-protein coupled receptor 1 family. Gastric fundus and, to a lesser extent, in brain.

It localises to the cell membrane. Its function is as follows. The H2 subclass of histamine receptors mediates gastric acid secretion. The activity of this receptor is mediated by G proteins which activate adenylyl cyclase. This chain is Histamine H2 receptor (HRH2), found in Canis lupus familiaris (Dog).